Reading from the N-terminus, the 357-residue chain is Dual-specificity RNA methyltransferase RlmN (357 aa).

Glu-89 functions as the Proton acceptor in the catalytic mechanism. Positions 109–340 (EGEKYTVCVS…CTIRESKALD (232 aa)) constitute a Radical SAM core domain. A disulfide bridge links Cys-116 with Cys-345. [4Fe-4S] cluster-binding residues include Cys-123, Cys-127, and Cys-130. S-adenosyl-L-methionine-binding positions include 173–174 (GE), Ser-203, 226–228 (SLH), and Asn-302. Cys-345 acts as the S-methylcysteine intermediate in catalysis.

This sequence belongs to the radical SAM superfamily. RlmN family. [4Fe-4S] cluster is required as a cofactor.

It localises to the cytoplasm. The catalysed reaction is adenosine(2503) in 23S rRNA + 2 reduced [2Fe-2S]-[ferredoxin] + 2 S-adenosyl-L-methionine = 2-methyladenosine(2503) in 23S rRNA + 5'-deoxyadenosine + L-methionine + 2 oxidized [2Fe-2S]-[ferredoxin] + S-adenosyl-L-homocysteine. It carries out the reaction adenosine(37) in tRNA + 2 reduced [2Fe-2S]-[ferredoxin] + 2 S-adenosyl-L-methionine = 2-methyladenosine(37) in tRNA + 5'-deoxyadenosine + L-methionine + 2 oxidized [2Fe-2S]-[ferredoxin] + S-adenosyl-L-homocysteine. In terms of biological role, specifically methylates position 2 of adenine 2503 in 23S rRNA and position 2 of adenine 37 in tRNAs. m2A2503 modification seems to play a crucial role in the proofreading step occurring at the peptidyl transferase center and thus would serve to optimize ribosomal fidelity. The protein is Dual-specificity RNA methyltransferase RlmN of Helicobacter pylori (strain P12).